The chain runs to 266 residues: Agamous-like MADS-box protein AGL97 (266 aa).

Residues Gly-3–Phe-63 enclose the MADS-box domain. Residues Trp-88–Leu-130 are a coiled coil.

In terms of assembly, interacts with AGL27 and AGL62.

The protein localises to the nucleus. In terms of biological role, putative transcription factor. In Arabidopsis thaliana (Mouse-ear cress), this protein is Agamous-like MADS-box protein AGL97 (AGL97).